The sequence spans 670 residues: Polar flagellar hook-associated protein 2 (670 aa).

The disordered stretch occupies residues 226 to 300 (PLQAPQQPDQ…RSSLRPEERI (75 aa)). A compositionally biased stretch (acidic residues) spans 257–266 (AQDDAQDDAS). Residues 272 to 283 (AAGAEAAKAGQE) show a composition bias toward low complexity. Positions 284–300 (AIDKANQRSSLRPEERI) are enriched in basic and acidic residues. Residues 342 to 428 (GTLTDSYVTT…AQSSFEEYLG (87 aa)) are a coiled coil.

Belongs to the FliD family. Homopentamer.

The protein localises to the secreted. The protein resides in the bacterial flagellum. In terms of biological role, required for the morphogenesis and for the elongation of the flagellar filament by facilitating polymerization of the flagellin monomers at the tip of growing filament. Forms a capping structure, which prevents flagellin subunits (transported through the central channel of the flagellum) from leaking out without polymerization at the distal end. Important for swimming motility. The sequence is that of Polar flagellar hook-associated protein 2 (fliDP) from Vibrio parahaemolyticus serotype O3:K6 (strain RIMD 2210633).